Consider the following 93-residue polypeptide: Histone H2B (93 aa).

Residues 1–12 (MPEPAKSAPAPK) show a composition bias toward low complexity. The segment at 1–31 (MPEPAKSAPAPKKGSKKAVTKTQKKGDKKRX) is disordered. Residues lysine 6 and lysine 13 each carry the N6-acetyllysine modification. Residues 13–28 (KGSKKAVTKTQKKGDK) are compositionally biased toward basic residues. Phosphoserine is present on serine 15. Lysine 16 and lysine 21 each carry N6-acetyllysine.

This sequence belongs to the histone H2B family. The nucleosome is a histone octamer containing two molecules each of H2A, H2B, H3 and H4 assembled in one H3-H4 heterotetramer and two H2A-H2B heterodimers. The octamer wraps approximately 147 bp of DNA. Post-translationally, monoubiquitination at the C-terminal Lys gives a specific tag for epigenetic transcriptional activation and is also prerequisite for histone H3 'Lys-4' and 'Lys-79' methylation. Phosphorylated on Ser-15 during apoptosis; which facilitates apoptotic chromatin condensation.

The protein resides in the nucleus. The protein localises to the chromosome. In terms of biological role, core component of nucleosome. Nucleosomes wrap and compact DNA into chromatin, limiting DNA accessibility to the cellular machineries which require DNA as a template. Histones thereby play a central role in transcription regulation, DNA repair, DNA replication and chromosomal stability. DNA accessibility is regulated via a complex set of post-translational modifications of histones, also called histone code, and nucleosome remodeling. This is Histone H2B from Crocodylus niloticus (Nile crocodile).